The chain runs to 78 residues: Small ribosomal subunit protein bS18B (78 aa).

The interval 1–22 (MPRKPVRKVASTPRPNPLDQNG) is disordered.

The protein belongs to the bacterial ribosomal protein bS18 family. In terms of assembly, part of the 30S ribosomal subunit. Forms a tight heterodimer with protein bS6.

Binds as a heterodimer with protein bS6 to the central domain of the 16S rRNA, where it helps stabilize the platform of the 30S subunit. The chain is Small ribosomal subunit protein bS18B from Streptomyces avermitilis (strain ATCC 31267 / DSM 46492 / JCM 5070 / NBRC 14893 / NCIMB 12804 / NRRL 8165 / MA-4680).